The chain runs to 84 residues: Anaphase-promoting complex subunit 11 (84 aa).

Positions 23, 26, 34, 37, 44, 51, 53, 56, 58, 59, 73, and 76 each coordinate Zn(2+). The RING-type zinc finger occupies 34–77 (CPDCKVPGDDCPLVWGQCSHCFHMHCILKWLNAQQVQQHCPMCR).

Belongs to the RING-box family. In terms of assembly, the mammalian APC/C is composed at least of 14 distinct subunits ANAPC1, ANAPC2, CDC27/APC3, ANAPC4, ANAPC5, CDC16/APC6, ANAPC7, CDC23/APC8, ANAPC10, ANAPC11, CDC26/APC12, ANAPC13, ANAPC15 and ANAPC16 that assemble into a complex of at least 19 chains with a combined molecular mass of around 1.2 MDa; APC/C interacts with FZR1 and FBXO5. Interacts with the cullin domain of ANAPC2. Interacts with UBE2D2. In terms of processing, auto-ubiquitinated.

It is found in the cytoplasm. It localises to the nucleus. Its pathway is protein modification; protein ubiquitination. Its function is as follows. Together with the cullin protein ANAPC2, constitutes the catalytic component of the anaphase promoting complex/cyclosome (APC/C), a cell cycle-regulated E3 ubiquitin ligase that controls progression through mitosis and the G1 phase of the cell cycle. The APC/C complex acts by mediating ubiquitination and subsequent degradation of target proteins: it mainly mediates the formation of 'Lys-11'-linked polyubiquitin chains and, to a lower extent, the formation of 'Lys-48'- and 'Lys-63'-linked polyubiquitin chains. The APC/C complex catalyzes assembly of branched 'Lys-11'-/'Lys-48'-linked branched ubiquitin chains on target proteins. May recruit the E2 ubiquitin-conjugating enzymes to the complex. This chain is Anaphase-promoting complex subunit 11 (Anapc11), found in Mus musculus (Mouse).